The following is a 371-amino-acid chain: LIM domain-binding protein 2 (371 aa).

2 disordered regions span residues 244 to 289 and 325 to 371; these read APPA…AAAN and QYDA…QASQ. A compositionally biased stretch (low complexity) spans 263 to 289; sequence STSSTSNSSAGNNANSTNSKKKSAAAN. Residues 296–335 enclose the LIM interaction domain (LID) domain; that stretch reads DVMVVGEPTLMGGEFGDEDERLITRLENTQYDAANGMDDE. The segment covering 339–371 has biased composition (polar residues); that stretch reads NNSPALGNNSPWNSKPPANQETKSENPTPQASQ.

Belongs to the LDB family. First expressed at stages 15-16 in presumptive limb mesoderm. As limb outgrowth proceeds, expressed in the entire limb bud, concentrating in the distal mesoderm throughout limb development. Both hindlimbs and forelimbs exhibit similar expression patterns.

It localises to the nucleus. Binds to the LIM domain of a wide variety of LIM domain-containing transcription factors. The sequence is that of LIM domain-binding protein 2 (LDB2) from Gallus gallus (Chicken).